The following is a 143-amino-acid chain: EKC/KEOPS complex subunit LAGE3 (143 aa).

The disordered stretch occupies residues 1 to 57 (MRDADADAGGGADGGDGRGGHSCRGGVDTAAAPAGGAPPAHAPGPGRDAASAARGSR). Over residues 30 to 55 (AAAPAGGAPPAHAPGPGRDAASAARG) the composition is skewed to low complexity.

This sequence belongs to the CTAG/PCC1 family. Component of the EKC/KEOPS complex composed of at least GON7, TP53RK, TPRKB, OSGEP and LAGE3; the whole complex dimerizes. Ubiquitous.

The protein resides in the cytoplasm. It localises to the nucleus. Component of the EKC/KEOPS complex that is required for the formation of a threonylcarbamoyl group on adenosine at position 37 (t(6)A37) in tRNAs that read codons beginning with adenine. The complex is probably involved in the transfer of the threonylcarbamoyl moiety of threonylcarbamoyl-AMP (TC-AMP) to the N6 group of A37. LAGE3 functions as a dimerization module for the complex. The chain is EKC/KEOPS complex subunit LAGE3 from Homo sapiens (Human).